The chain runs to 951 residues: Valine--tRNA ligase (951 aa).

Positions 42-52 (PNVTGSLHMGH) match the 'HIGH' region motif. The 'KMSKS' region signature appears at 554 to 558 (KMSKS). K557 is an ATP binding site. The stretch at 880-944 (AGLINKEDEL…AEAKAKLIEQ (65 aa)) forms a coiled coil.

It belongs to the class-I aminoacyl-tRNA synthetase family. ValS type 1 subfamily. In terms of assembly, monomer.

It is found in the cytoplasm. The enzyme catalyses tRNA(Val) + L-valine + ATP = L-valyl-tRNA(Val) + AMP + diphosphate. Catalyzes the attachment of valine to tRNA(Val). As ValRS can inadvertently accommodate and process structurally similar amino acids such as threonine, to avoid such errors, it has a 'posttransfer' editing activity that hydrolyzes mischarged Thr-tRNA(Val) in a tRNA-dependent manner. The sequence is that of Valine--tRNA ligase from Shigella dysenteriae serotype 1 (strain Sd197).